Reading from the N-terminus, the 706-residue chain is ATP-dependent zinc metalloprotease FtsH (706 aa).

Positions 1 to 17 are enriched in polar residues; that stretch reads MAKNSLKPSNPYNSEPE. The interval 1-20 is disordered; that stretch reads MAKNSLKPSNPYNSEPETPQ. The Cytoplasmic segment spans residues 1-24; the sequence is MAKNSLKPSNPYNSEPETPQPRPK. Residues 25–45 traverse the membrane as a helical segment; that stretch reads LPMIYYVVVIALLIGLQLAFF. Over 46–142 the chain is Periplasmic; the sequence is WSGSSREIPY…RYEGSPGTTW (97 aa). A disordered region spans residues 88–111; that stretch reads GLPKQEEGNDTTRKLLPGAKTPEN. Residues 91 to 100 show a composition bias toward basic and acidic residues; sequence KQEEGNDTTR. A helical transmembrane segment spans residues 143 to 163; the sequence is ISELIQWVLPFALLFGLYFFI. The Cytoplasmic segment spans residues 164 to 706; it reads FRRMGAGGPG…LRQSRNVSDN (543 aa). 239–246 serves as a coordination point for ATP; the sequence is GPPGTGKT. His462 provides a ligand contact to Zn(2+). The active site involves Glu463. Zn(2+)-binding residues include His466 and Asp539. The tract at residues 641–681 is disordered; it reads RPGGQEEDSGEVDCSKKSAENGMVAHEPETTADAESTEKVG.

This sequence in the central section; belongs to the AAA ATPase family. It in the C-terminal section; belongs to the peptidase M41 family. In terms of assembly, homohexamer. Zn(2+) serves as cofactor.

It is found in the cell inner membrane. Functionally, acts as a processive, ATP-dependent zinc metallopeptidase for both cytoplasmic and membrane proteins. Plays a role in the quality control of integral membrane proteins. This chain is ATP-dependent zinc metalloprotease FtsH, found in Chlorobium luteolum (strain DSM 273 / BCRC 81028 / 2530) (Pelodictyon luteolum).